The following is a 669-amino-acid chain: DNA polymerase epsilon subunit B (669 aa).

Residues 96–115 form a disordered region; the sequence is QISTRNGSADNLAKKAERSD.

The protein belongs to the DNA polymerase epsilon subunit B family. In terms of assembly, heterotetramer. Consists of four subunits: POL2, DPB2, DPB3 and DPB4.

Its subcellular location is the nucleus. Its function is as follows. As accessory component of the DNA polymerase epsilon (DNA polymerase II) participates in chromosomal DNA replication. This chain is DNA polymerase epsilon subunit B (DPB2), found in Debaryomyces hansenii (strain ATCC 36239 / CBS 767 / BCRC 21394 / JCM 1990 / NBRC 0083 / IGC 2968) (Yeast).